Reading from the N-terminus, the 697-residue chain is Ion-translocating oxidoreductase complex subunit C (697 aa).

2 consecutive 4Fe-4S ferredoxin-type domains span residues Ala366–Tyr397 and Lys407–Tyr436. Cys377, Cys380, Cys383, Cys387, Cys416, Cys419, Cys422, and Cys426 together coordinate [4Fe-4S] cluster. The interval Ala576–Ala674 is disordered. Over residues Glu581–Lys596 the composition is skewed to basic and acidic residues. Low complexity predominate over residues Ala597–Gln615. Over residues Glu619 to Lys634 the composition is skewed to basic and acidic residues. Residues Ala635–Gln653 are compositionally biased toward low complexity. The segment covering Glu657–Lys672 has biased composition (basic and acidic residues).

This sequence belongs to the 4Fe4S bacterial-type ferredoxin family. RnfC subfamily. As to quaternary structure, the complex is composed of six subunits: RnfA, RnfB, RnfC, RnfD, RnfE and RnfG. [4Fe-4S] cluster is required as a cofactor.

It is found in the cell inner membrane. In terms of biological role, part of a membrane-bound complex that couples electron transfer with translocation of ions across the membrane. In Yersinia enterocolitica serotype O:8 / biotype 1B (strain NCTC 13174 / 8081), this protein is Ion-translocating oxidoreductase complex subunit C.